A 254-amino-acid chain; its full sequence is Isoprenyl transferase (254 aa).

Asp-12 is a catalytic residue. Residue Asp-12 participates in Mg(2+) binding. Residues Gly-13 to Arg-16, Trp-17, Arg-25, His-29, and Ser-57 to Glu-59 contribute to the substrate site. Residue Asn-60 is the Proton acceptor of the active site. Residues Trp-61, Arg-63, Arg-180, and Arg-186 to Ser-188 each bind substrate. Glu-199 is a binding site for Mg(2+).

This sequence belongs to the UPP synthase family. In terms of assembly, homodimer. It depends on Mg(2+) as a cofactor.

Functionally, catalyzes the condensation of isopentenyl diphosphate (IPP) with allylic pyrophosphates generating different type of terpenoids. The sequence is that of Isoprenyl transferase from Brucella suis biovar 1 (strain 1330).